We begin with the raw amino-acid sequence, 89 residues long: Cornifin-B (89 aa).

The segment at 1–29 (MSSQQQKQPCTPPPQLQQQQVKQPCQPPP) is disordered. 8 consecutive repeat copies span residues 3-14 (SQQQKQPCTPPP), 18-29 (QQQVKQPCQPPP), 31-38 (EPCIPKTK), 39-46 (EPCHPKVP), 47-54 (EPCHPKVP), 55-62 (EPCQPKVP), 63-70 (EPCHPKVP), and 71-78 (EPCPSIVT). A 2 X 12 AA approximate repeats region spans residues 3-29 (SQQQKQPCTPPPQLQQQQVKQPCQPPP). The tract at residues 31–78 (EPCIPKTKEPCHPKVPEPCHPKVPEPCQPKVPEPCHPKVPEPCPSIVT) is 6 X 8 AA approximate tandem repeats.

The protein belongs to the cornifin (SPRR) family. The N-terminus is blocked. In terms of tissue distribution, suprabasal layers of squamous-differentiated tissues such as epidermis, esophagus, tongue and trachea.

It localises to the cytoplasm. Cross-linked envelope protein of keratinocytes. It is a keratinocyte protein that first appears in the cell cytosol, but ultimately becomes cross-linked to membrane proteins by transglutaminase. All that results in the formation of an insoluble envelope beneath the plasma membrane. Can function as both amine donor and acceptor in transglutaminase-mediated cross-linkage. This chain is Cornifin-B (SPRR1B), found in Homo sapiens (Human).